We begin with the raw amino-acid sequence, 323 residues long: Acetyl esterase (323 aa).

Residues 91 to 93 (HGG) carry the Involved in the stabilization of the negatively charged intermediate by the formation of the oxyanion hole motif. Catalysis depends on residues Ser165, Asp262, and His292.

The protein belongs to the 'GDXG' lipolytic enzyme family. Homodimer. Interacts with MalT and MelA.

The protein resides in the cytoplasm. Displays esterase activity towards short chain fatty esters (acyl chain length of up to 8 carbons). Able to hydrolyze triacetylglycerol (triacetin) and tributyrylglycerol (tributyrin), but not trioleylglycerol (triolein) or cholesterol oleate. Negatively regulates MalT activity by antagonizing maltotriose binding. Inhibits MelA galactosidase activity. The polypeptide is Acetyl esterase (Salmonella agona (strain SL483)).